Here is a 123-residue protein sequence, read N- to C-terminus: Small ribosomal subunit protein uS13c (123 aa).

The tract at residues 90–123 (GKRHRNNLPVRGQRTRTNARSRRGSKKTVTGKKK) is disordered. Residues 102 to 123 (QRTRTNARSRRGSKKTVTGKKK) are compositionally biased toward basic residues.

The protein belongs to the universal ribosomal protein uS13 family. In terms of assembly, part of the 30S ribosomal subunit.

It is found in the plastid. The protein resides in the chloroplast. In terms of biological role, located at the top of the head of the 30S subunit, it contacts several helices of the 16S rRNA. The protein is Small ribosomal subunit protein uS13c of Trieres chinensis (Marine centric diatom).